A 172-amino-acid polypeptide reads, in one-letter code: Scytalone dehydratase-like protein Arp1 (172 aa).

Tyr49 provides a ligand contact to substrate. Catalysis depends on residues His84 and His109. Asn130 contacts substrate.

Belongs to the scytalone dehydratase family. Homotrimer. Each subunit contains an active site, located in the central part of the hydrophobic core of the monomer, which functions independently.

In terms of biological role, scytalone dehydratase-like protein; part of the Pks2 gene cluster that mediates the formation of infectious structures (appressoria), enabling these fungi to kill insects faster. The product of the Pks2 gene cluster is different from the one of Pks1 and has still not been identified. The sequence is that of Scytalone dehydratase-like protein Arp1 from Metarhizium guizhouense (strain ARSEF 977).